A 2581-amino-acid chain; its full sequence is Chromodomain-helicase-DNA-binding protein 8 (2581 aa).

5 disordered regions span residues 22 to 114 (DDSF…QTST), 253 to 283 (VKGS…TQGE), 349 to 392 (QKIQ…SPGQ), 429 to 582 (ALSS…QVKR), and 596 to 615 (DEEE…PILP). Composition is skewed to polar residues over residues 42-51 (SLDSLDQMNQ) and 94-114 (DYTT…QTST). Low complexity predominate over residues 255–267 (GSAPAGNPGATGP). Pro residues predominate over residues 355 to 370 (PQPPSSQPQPQQPPST). Ser432 carries the post-translational modification Phosphoserine. Composition is skewed to basic and acidic residues over residues 445–462 (GMEE…EKAN) and 493–516 (RPEE…EEKP). Ser553 and Ser562 each carry phosphoserine. Basic residues predominate over residues 572–582 (QKRRSNRQVKR). Lys609 participates in a covalent cross-link: Glycyl lysine isopeptide (Lys-Gly) (interchain with G-Cter in SUMO). 2 Chromo domains span residues 642–709 (AIVD…AQMR) and 724–790 (VEVD…RVNR). A Helicase ATP-binding domain is found at 823–997 (LFNWYNRQNC…FSLLHFLEPS (175 aa)). An ATP-binding site is contributed by 836–843 (DEMGLGKT). The short motif at 948–951 (DEAH) is the DEAH box element. In terms of domain architecture, Helicase C-terminal spans 1137–1288 (LIDKLLPKLK…KAVLQSMSGR (152 aa)). A phosphoserine mark is found at Ser1420 and Ser1424. The tract at residues 1692-1712 (EDPEYKPLQGPPKDQDDEGDP) is disordered. The segment at 1789-2302 (IARREKQQRW…LVELEVECME (514 aa)) is interaction with FAM124B. Ser1976 and Ser1978 each carry phosphoserine. A disordered region spans residues 1991-2116 (SRTASPLPLR…TDQSRSKLYD (126 aa)). Thr1993 bears the Phosphothreonine mark. Phosphoserine is present on residues Ser1995 and Ser2008. Positions 2011 to 2021 (ETATQVPSLES) are enriched in polar residues. A Glycyl lysine isopeptide (Lys-Gly) (interchain with G-Cter in SUMO2) cross-link involves residue Lys2025. Residue Ser2046 is modified to Phosphoserine. Thr2051 bears the Phosphothreonine mark. Over residues 2064–2073 (EDEDDSDSEL) the composition is skewed to acidic residues. Phosphoserine occurs at positions 2069 and 2071. Low complexity predominate over residues 2076–2095 (SKLSPSSSSSSSSSSSSSST). The span at 2103–2116 (EEKLTDQSRSKLYD) shows a compositional bias: basic and acidic residues. Ser2182, Ser2200, and Ser2202 each carry phosphoserine. A disordered region spans residues 2189–2229 (GILGPGNHLLDSPSLTPGEYGDSPVPTPRSSSAASMAEEEA). Phosphothreonine is present on Thr2204. Ser2211 carries the post-translational modification Phosphoserine. Thr2215 carries the post-translational modification Phosphothreonine. Over residues 2218-2229 (SSSAASMAEEEA) the composition is skewed to low complexity. Ser2223 is modified (phosphoserine). Residue Lys2256 forms a Glycyl lysine isopeptide (Lys-Gly) (interchain with G-Cter in SUMO2) linkage. The tract at residues 2481–2581 (PSSPHVDSST…NSDSSEDADD (101 aa)) is disordered. The segment covering 2492–2510 (LHHHHHHPHPHHHHHHHPG) has biased composition (basic residues). Ser2519 bears the Phosphoserine mark. Over residues 2519–2528 (SPVTTASGTT) the composition is skewed to polar residues. The segment covering 2536–2550 (PEEDDDEDEEDDDDL) has biased composition (acidic residues).

The protein belongs to the SNF2/RAD54 helicase family. CHD8 subfamily. As to quaternary structure, interacts with p53/TP53, histone H1, CTNNB1, CTCF and PIAS3. Component of some MLL1/MLL complex, at least composed of the core components KMT2A/MLL1, ASH2L, HCFC1/HCF1, WDR5 and RBBP5, as well as the facultative components BACC1, CHD8, E2F6, HSP70, INO80C, KANSL1, LAS1L, MAX, MCRS1, MGA, KAT8/MOF, PELP1, PHF20, PRP31, RING2, RUVB1/TIP49A, RUVB2/TIP49B, SENP3, TAF1, TAF4, TAF6, TAF7, TAF9 and TEX10. Interacts with CHD7. Interacts with FAM124B. Interacts with TLK2. Interacts with HNRNPL in an RNA-dependent manner. In terms of processing, sumoylated.

The protein resides in the nucleus. The enzyme catalyses ATP + H2O = ADP + phosphate + H(+). Functionally, ATP-dependent chromatin-remodeling factor, it slides nucleosomes along DNA; nucleosome sliding requires ATP. Acts as a transcription repressor by remodeling chromatin structure and recruiting histone H1 to target genes. Suppresses p53/TP53-mediated apoptosis by recruiting histone H1 and preventing p53/TP53 transactivation activity. Acts as a negative regulator of Wnt signaling pathway by regulating beta-catenin (CTNNB1) activity. Negatively regulates CTNNB1-targeted gene expression by being recruited specifically to the promoter regions of several CTNNB1 responsive genes. Involved in both enhancer blocking and epigenetic remodeling at chromatin boundary via its interaction with CTCF. Acts as a suppressor of STAT3 activity by suppressing the LIF-induced STAT3 transcriptional activity. Also acts as a transcription activator via its interaction with ZNF143 by participating in efficient U6 RNA polymerase III transcription. Regulates alternative splicing of a core group of genes involved in neuronal differentiation, cell cycle and DNA repair. Enables H3K36me3-coupled transcription elongation and co-transcriptional RNA processing likely via interaction with HNRNPL. The polypeptide is Chromodomain-helicase-DNA-binding protein 8 (Homo sapiens (Human)).